The primary structure comprises 300 residues: uncharacterized protein (300 aa).

The Charge relay system role is filled by serine 49. Tyrosine 137 (proton donor) is an active-site residue. Residue lysine 165 is the Schiff-base intermediate with substrate of the active site.

Belongs to the DapA family. In terms of assembly, homotetramer.

The protein localises to the cytoplasm. Its function is as follows. Upon expression in E.coli complements a dapA deletion mutation, but this may not be its physiological function. This is an uncharacterized protein from Rhizobium meliloti (Ensifer meliloti).